The following is a 431-amino-acid chain: Adenylosuccinate lyase (431 aa).

Residues 4–5, 67–69, and 93–94 each bind N(6)-(1,2-dicarboxyethyl)-AMP; these read RY, RHD, and TS. The active-site Proton donor/acceptor is the histidine 141. Glutamine 212 serves as a coordination point for N(6)-(1,2-dicarboxyethyl)-AMP. Serine 262 serves as the catalytic Proton donor/acceptor. Residues serine 263, 268 to 270, asparagine 276, and 307 to 311 each bind N(6)-(1,2-dicarboxyethyl)-AMP; these read KRN and SAERI.

It belongs to the lyase 1 family. Adenylosuccinate lyase subfamily. Homotetramer. Residues from neighboring subunits contribute catalytic and substrate-binding residues to each active site.

The catalysed reaction is N(6)-(1,2-dicarboxyethyl)-AMP = fumarate + AMP. The enzyme catalyses (2S)-2-[5-amino-1-(5-phospho-beta-D-ribosyl)imidazole-4-carboxamido]succinate = 5-amino-1-(5-phospho-beta-D-ribosyl)imidazole-4-carboxamide + fumarate. It functions in the pathway purine metabolism; AMP biosynthesis via de novo pathway; AMP from IMP: step 2/2. It participates in purine metabolism; IMP biosynthesis via de novo pathway; 5-amino-1-(5-phospho-D-ribosyl)imidazole-4-carboxamide from 5-amino-1-(5-phospho-D-ribosyl)imidazole-4-carboxylate: step 2/2. Its function is as follows. Catalyzes two reactions in de novo purine nucleotide biosynthesis. Catalyzes the breakdown of 5-aminoimidazole- (N-succinylocarboxamide) ribotide (SAICAR or 2-[5-amino-1-(5-phospho-beta-D-ribosyl)imidazole-4-carboxamido]succinate) to 5-aminoimidazole-4-carboxamide ribotide (AICAR or 5-amino-1-(5-phospho-beta-D-ribosyl)imidazole-4-carboxamide) and fumarate, and of adenylosuccinate (ADS or N(6)-(1,2-dicarboxyethyl)-AMP) to adenosine monophosphate (AMP) and fumarate. Influences the affinity of glutamyl--tRNA ligase for its substrates and increases its thermostability. This is Adenylosuccinate lyase (purB) from Bacillus subtilis (strain 168).